Consider the following 141-residue polypeptide: MTVERTLSIIKPDAVAKNVIGQIYARFEAAGLKVVAAKMAHLSAREAQAFYAVHKDRPFFKDLVDFMISGPVMIQALEGENAVLKNRDLMGATDPKKAAPGTIRADFADSIDANAVHGSDAAETAAVEIAFFFPGMNVYSR.

ATP-binding residues include Lys-11, Phe-59, Arg-87, Thr-93, Arg-104, and Asn-114. His-117 functions as the Pros-phosphohistidine intermediate in the catalytic mechanism.

The protein belongs to the NDK family. Homotetramer. It depends on Mg(2+) as a cofactor.

Its subcellular location is the cytoplasm. The catalysed reaction is a 2'-deoxyribonucleoside 5'-diphosphate + ATP = a 2'-deoxyribonucleoside 5'-triphosphate + ADP. It catalyses the reaction a ribonucleoside 5'-diphosphate + ATP = a ribonucleoside 5'-triphosphate + ADP. In terms of biological role, major role in the synthesis of nucleoside triphosphates other than ATP. The ATP gamma phosphate is transferred to the NDP beta phosphate via a ping-pong mechanism, using a phosphorylated active-site intermediate. In Albidiferax ferrireducens (strain ATCC BAA-621 / DSM 15236 / T118) (Rhodoferax ferrireducens), this protein is Nucleoside diphosphate kinase.